A 483-amino-acid polypeptide reads, in one-letter code: Regulatory protein ViaA (483 aa).

The protein belongs to the ViaA family. As to quaternary structure, homodimer. Interacts with RavA.

The protein resides in the cytoplasm. Component of the RavA-ViaA chaperone complex, which may act on the membrane to optimize the function of some of the respiratory chains. ViaA stimulates the ATPase activity of RavA. The protein is Regulatory protein ViaA of Shigella sonnei (strain Ss046).